Consider the following 468-residue polypeptide: Glutamine synthetase (468 aa).

The GS beta-grasp domain maps to 13–97 (NEVKFVDLRF…IRCDILEPAT (85 aa)). The region spanning 105–468 (PRSIAKRAED…PVEFELYYSV (364 aa)) is the GS catalytic domain. Residues glutamate 130 and glutamate 132 each contribute to the Mg(2+) site. Glutamate 208 lines the ATP pocket. Residues glutamate 213 and glutamate 220 each contribute to the Mg(2+) site. L-glutamate-binding positions include 264–265 (NG) and glycine 265. Position 269 (histidine 269) interacts with Mg(2+). Residues 271 to 273 (HQS) and serine 273 contribute to the ATP site. 3 residues coordinate L-glutamate: arginine 321, glutamate 327, and arginine 339. Residues arginine 339, arginine 344, and lysine 352 each contribute to the ATP site. Glutamate 357 is a Mg(2+) binding site. Position 359 (arginine 359) interacts with L-glutamate. An O-AMP-tyrosine modification is found at tyrosine 397.

It belongs to the glutamine synthetase family. As to quaternary structure, oligomer of 12 subunits arranged in the form of two hexameric ring. It depends on Mg(2+) as a cofactor.

The protein resides in the cytoplasm. The enzyme catalyses L-glutamate + NH4(+) + ATP = L-glutamine + ADP + phosphate + H(+). Its activity is regulated as follows. The activity of this enzyme could be controlled by adenylation under conditions of abundant glutamine. In terms of biological role, catalyzes the ATP-dependent biosynthesis of glutamine from glutamate and ammonia. This is Glutamine synthetase from Vibrio alginolyticus.